The chain runs to 101 residues: Small ribosomal subunit protein uS14 (101 aa).

Residues 46–72 are disordered; sequence FELNRQPRDASPVRVRNRDSRDGRPRG. Residues 61-70 show a composition bias toward basic and acidic residues; that stretch reads RNRDSRDGRP.

This sequence belongs to the universal ribosomal protein uS14 family. Part of the 30S ribosomal subunit. Contacts proteins S3 and S10.

Its function is as follows. Binds 16S rRNA, required for the assembly of 30S particles and may also be responsible for determining the conformation of the 16S rRNA at the A site. The polypeptide is Small ribosomal subunit protein uS14 (Corynebacterium diphtheriae (strain ATCC 700971 / NCTC 13129 / Biotype gravis)).